Here is a 901-residue protein sequence, read N- to C-terminus: Valine--tRNA ligase (901 aa).

The tract at residues 1 to 37 (MLPGCYTHRLNMSDTQDPPQDESTTDESADALDGEYD) is disordered. Residues 19 to 35 (PQDESTTDESADALDGE) are compositionally biased toward acidic residues. The 'HIGH' region signature appears at 72–82 (PTVSGNLHMGH). The 'KMSKS' region motif lies at 572–576 (AMSKS). K575 is a binding site for ATP.

Belongs to the class-I aminoacyl-tRNA synthetase family. ValS type 2 subfamily.

The protein localises to the cytoplasm. The enzyme catalyses tRNA(Val) + L-valine + ATP = L-valyl-tRNA(Val) + AMP + diphosphate. Catalyzes the attachment of valine to tRNA(Val). As ValRS can inadvertently accommodate and process structurally similar amino acids such as threonine, to avoid such errors, it has a 'posttransfer' editing activity that hydrolyzes mischarged Thr-tRNA(Val) in a tRNA-dependent manner. This Haloarcula marismortui (strain ATCC 43049 / DSM 3752 / JCM 8966 / VKM B-1809) (Halobacterium marismortui) protein is Valine--tRNA ligase.